A 139-amino-acid chain; its full sequence is Large ribosomal subunit protein uL16 (139 aa).

Positions 1-20 (MLIPKRTKYRKQHRPVRRGM) are enriched in basic residues. Residues 1–21 (MLIPKRTKYRKQHRPVRRGMS) form a disordered region.

Belongs to the universal ribosomal protein uL16 family. Part of the 50S ribosomal subunit.

Its function is as follows. Binds 23S rRNA and is also seen to make contacts with the A and possibly P site tRNAs. The chain is Large ribosomal subunit protein uL16 from Bifidobacterium adolescentis (strain ATCC 15703 / DSM 20083 / NCTC 11814 / E194a).